Consider the following 369-residue polypeptide: ATP-dependent (S)-NAD(P)H-hydrate dehydratase (369 aa).

A YjeF C-terminal domain is found at 14 to 356 (LFQKARKLVP…DEVHESFLTL (343 aa)). Residues Gly126 and 179–185 (NVNEFSR) each bind (6S)-NADPHX. Residues 231–235 (KGPHD) and 250–259 (GGLKRSGGQG) contribute to the ATP site. Asp260 is a (6S)-NADPHX binding site. Positions 284 to 306 (GEQEHSKEAENKEEVQGELESNK) are enriched in basic and acidic residues. The interval 284–307 (GEQEHSKEAENKEEVQGELESNKR) is disordered.

Belongs to the NnrD/CARKD family. Mg(2+) is required as a cofactor.

The protein resides in the cytoplasm. It carries out the reaction (6S)-NADHX + ATP = ADP + phosphate + NADH + H(+). The catalysed reaction is (6S)-NADPHX + ATP = ADP + phosphate + NADPH + H(+). Catalyzes the dehydration of the S-form of NAD(P)HX at the expense of ATP, which is converted to ADP. Together with NAD(P)HX epimerase, which catalyzes the epimerization of the S- and R-forms, the enzyme allows the repair of both epimers of NAD(P)HX, a damaged form of NAD(P)H that is a result of enzymatic or heat-dependent hydration. The chain is ATP-dependent (S)-NAD(P)H-hydrate dehydratase from Emericella nidulans (strain FGSC A4 / ATCC 38163 / CBS 112.46 / NRRL 194 / M139) (Aspergillus nidulans).